The sequence spans 1007 residues: Lysosomal alpha-mannosidase (1007 aa).

Positions 1–47 (MGASVLPLGLGAGDCQSSSGRRMSACLPRTALSFLLSLLLATPGARA) are cleaved as a signal peptide. Cystine bridges form between Cys-53–Cys-356 and Cys-266–Cys-271. Zn(2+)-binding residues include His-70 and Asp-72. Asn-131 is a glycosylation site (N-linked (GlcNAc...) asparagine). A Zn(2+)-binding site is contributed by Asp-194. The active-site Nucleophile is the Asp-194. Asn-308, Asn-343, and Asn-365 each carry an N-linked (GlcNAc...) asparagine glycan. 2 disulfides stabilise this stretch: Cys-410-Cys-470 and Cys-491-Cys-499. His-444 is a binding site for Zn(2+). 6 N-linked (GlcNAc...) asparagine glycosylation sites follow: Asn-495, Asn-540, Asn-639, Asn-686, Asn-760, and Asn-927.

The protein belongs to the glycosyl hydrolase 38 family. The cofactor is Zn(2+).

It is found in the lysosome. The enzyme catalyses Hydrolysis of terminal, non-reducing alpha-D-mannose residues in alpha-D-mannosides.. In terms of biological role, necessary for the catabolism of N-linked carbohydrates released during glycoprotein turnover. In Cavia porcellus (Guinea pig), this protein is Lysosomal alpha-mannosidase (MAN2B1).